The sequence spans 237 residues: Ribonuclease PH (237 aa).

Phosphate-binding positions include Arg-86 and 124-126 (GTR).

Belongs to the RNase PH family. Homohexameric ring arranged as a trimer of dimers.

The catalysed reaction is tRNA(n+1) + phosphate = tRNA(n) + a ribonucleoside 5'-diphosphate. Functionally, phosphorolytic 3'-5' exoribonuclease that plays an important role in tRNA 3'-end maturation. Removes nucleotide residues following the 3'-CCA terminus of tRNAs; can also add nucleotides to the ends of RNA molecules by using nucleoside diphosphates as substrates, but this may not be physiologically important. Probably plays a role in initiation of 16S rRNA degradation (leading to ribosome degradation) during starvation. This Cereibacter sphaeroides (strain KD131 / KCTC 12085) (Rhodobacter sphaeroides) protein is Ribonuclease PH.